The primary structure comprises 496 residues: Probable glycine dehydrogenase (decarboxylating) subunit 2 (496 aa).

Position 265 is an N6-(pyridoxal phosphate)lysine (Lys-265).

Belongs to the GcvP family. C-terminal subunit subfamily. As to quaternary structure, the glycine cleavage system is composed of four proteins: P, T, L and H. In this organism, the P 'protein' is a heterodimer of two subunits. Pyridoxal 5'-phosphate is required as a cofactor.

The enzyme catalyses N(6)-[(R)-lipoyl]-L-lysyl-[glycine-cleavage complex H protein] + glycine + H(+) = N(6)-[(R)-S(8)-aminomethyldihydrolipoyl]-L-lysyl-[glycine-cleavage complex H protein] + CO2. Its function is as follows. The glycine cleavage system catalyzes the degradation of glycine. The P protein binds the alpha-amino group of glycine through its pyridoxal phosphate cofactor; CO(2) is released and the remaining methylamine moiety is then transferred to the lipoamide cofactor of the H protein. This is Probable glycine dehydrogenase (decarboxylating) subunit 2 from Thioalkalivibrio sulfidiphilus (strain HL-EbGR7).